A 627-amino-acid polypeptide reads, in one-letter code: Protein fem-1 homolog B (627 aa).

ANK repeat units follow at residues 45–74 (QRSTPLIIAARNGHAKVVRLLLEHYRVQTQ), 87–116 (DGATALWCAAGAGHFEVVKLLVSHGANVNH), 120–149 (TNSTPLRAACFDGRLDIVKYLVENNANISI), and 153–182 (YDNTCLMIAAYKGHTDVVRYLLEQRADPNA). Zn(2+) contacts are provided by His-185, Cys-186, and His-218. ANK repeat units lie at residues 186 to 215 (CGATALHFAAEAGHIDIVKELIKWRAAIVV) and 218 to 248 (HGMTPLKVAAESCKADVVELLLSHADCDRRS). The stretch at 344 to 377 (SHPIIYRGAVYADNMEFEQCIKLWLHALHLRQKG) is one TPR repeat. 2 ANK repeats span residues 483-527 (EGFT…EVNA) and 531-568 (EGNSALHIIVQYNRPISDFLTLHSIIISLVEAGAHTDM).

It belongs to the fem-1 family. In terms of assembly, component of a CRL2 E3 ubiquitin-protein ligase complex, also named ECS (Elongin BC-CUL2/5-SOCS-box protein) complex, composed of CUL2, Elongin BC (ELOB and ELOC), RBX1 and substrate-specific adapter FEM1B. Homooligomer. Interacts with PPM1F and PHTF1. Interacts with the death domain of FAS/TNFRSF6 and TNFRSF1A. Interacts with CHEK1. Interacts with NKX3-1. As to expression, widely expressed. Highly expressed in testis. Weakly expressed in other tissues.

Its subcellular location is the cytoplasm. It localises to the nucleus. The protein operates within protein modification; protein ubiquitination. With respect to regulation, activity of the CRL2(FEM1B) complex toward FNIP1 is inhibited by BEX family proteins (BEX1, BEX2, BEX3, BEX4 and/or BEX5) in absence of reductive stress. Mechanistically, BEX proteins act as pseudosubstrate inhibitors that associate with FEM1B via zinc in absence of reductive stress, thereby preventing association between FEM1B and FNIP1. In terms of biological role, substrate-recognition component of a Cul2-RING (CRL2) E3 ubiquitin-protein ligase complex of the DesCEND (destruction via C-end degrons) pathway, which recognizes a C-degron located at the extreme C terminus of target proteins, leading to their ubiquitination and degradation. The C-degron recognized by the DesCEND pathway is usually a motif of less than ten residues and can be present in full-length proteins, truncated proteins or proteolytically cleaved forms. The CRL2(FEM1B) complex specifically recognizes proteins ending with -Gly-Leu-Asp-Arg, such as CDK5R1, leading to their ubiquitination and degradation. Also acts as a regulator of the reductive stress response by mediating ubiquitination of reduced FNIP1: in response to reductive stress, the CRL2(FEM1B) complex specifically recognizes a conserved Cys degron in FNIP1 when this degron is reduced, leading to FNIP1 degradation and subsequent activation of mitochondria to recalibrate reactive oxygen species (ROS). Mechanistically, recognizes and binds reduced FNIP1 through two interface zinc ions, which act as a molecular glue that recruit reduced FNIP1 to FEM1B. Promotes ubiquitination of GLI1, suppressing GLI1 transcriptional activator activity. Promotes ubiquitination and degradation of ANKRD37. Promotes ubiquitination and degradation of SLBP. Involved in apoptosis by acting as a death receptor-associated protein that mediates apoptosis. Also involved in glucose homeostasis in pancreatic islet. May also act as an adapter/mediator in replication stress-induced signaling that leads to the activation of CHEK1. The chain is Protein fem-1 homolog B from Homo sapiens (Human).